The sequence spans 335 residues: Acetyl-coenzyme A carboxylase carboxyl transferase subunit alpha (335 aa).

The CoA carboxyltransferase C-terminal domain maps to 40–294; that stretch reads QLETLAARRR…KEAIEKHLNA (255 aa).

It belongs to the AccA family. As to quaternary structure, acetyl-CoA carboxylase is a heterohexamer composed of biotin carboxyl carrier protein (AccB), biotin carboxylase (AccC) and two subunits each of ACCase subunit alpha (AccA) and ACCase subunit beta (AccD).

It is found in the cytoplasm. The enzyme catalyses N(6)-carboxybiotinyl-L-lysyl-[protein] + acetyl-CoA = N(6)-biotinyl-L-lysyl-[protein] + malonyl-CoA. It participates in lipid metabolism; malonyl-CoA biosynthesis; malonyl-CoA from acetyl-CoA: step 1/1. Component of the acetyl coenzyme A carboxylase (ACC) complex. First, biotin carboxylase catalyzes the carboxylation of biotin on its carrier protein (BCCP) and then the CO(2) group is transferred by the carboxyltransferase to acetyl-CoA to form malonyl-CoA. In Prochlorococcus marinus (strain MIT 9301), this protein is Acetyl-coenzyme A carboxylase carboxyl transferase subunit alpha.